Consider the following 302-residue polypeptide: Sulfate adenylyltransferase subunit 2 (302 aa).

The protein belongs to the PAPS reductase family. CysD subfamily. As to quaternary structure, heterodimer composed of CysD, the smaller subunit, and CysN.

The enzyme catalyses sulfate + ATP + H(+) = adenosine 5'-phosphosulfate + diphosphate. It participates in sulfur metabolism; hydrogen sulfide biosynthesis; sulfite from sulfate: step 1/3. Its function is as follows. With CysN forms the ATP sulfurylase (ATPS) that catalyzes the adenylation of sulfate producing adenosine 5'-phosphosulfate (APS) and diphosphate, the first enzymatic step in sulfur assimilation pathway. APS synthesis involves the formation of a high-energy phosphoric-sulfuric acid anhydride bond driven by GTP hydrolysis by CysN coupled to ATP hydrolysis by CysD. The polypeptide is Sulfate adenylyltransferase subunit 2 (Enterobacter sp. (strain 638)).